A 270-amino-acid chain; its full sequence is Mevalonyl-coenzyme A hydratase sidH (270 aa).

A PTS1-type peroxisomal targeting signal motif is present at residues 268 to 270; the sequence is SKL.

This sequence belongs to the enoyl-CoA hydratase/isomerase family.

The protein resides in the peroxisome. It functions in the pathway siderophore biosynthesis. In terms of biological role, mevalonyl-coenzyme A hydratase; part of the siderophore biosynthetic pathway. Aspergillus fumigatus produces 4 types of siderophores, low-molecular-mass iron chelators, including excreted fusarinine C (FsC) and triacetylfusarinine C (TAFC) for iron uptake and intacellular ferricrocin (FC) for hyphal and hydroxyferricrocin (HFC) for conidial iron distribution and storage. TAFC consists of 3 N(2)-acetyl-N(5)-anhydromevalonyl-N(5)-hydroxyornithine residues cyclically linked by ester bonds; FC is a cyclic hexapeptide with the structure Gly-Ser-Gly-(N(5)-acetyl-N(5)-hydroxyornithine)x3. The biosynthesis of all four siderophores depends on the hydroxylation of ornithine, catalyzed by the monooxygenase sidA. Subsequently, the pathways for biosynthesis of extra- and intracellular siderophores split. For biosynthesis of extracellular siderophores, the transacylase sidF transfers anhydromevalonyl to N(5)-hydroxyornithine. The required anhydromevalonyl-CoA moiety is derived from mevalonate by CoA ligation and dehydration catalyzed by sidI and sidH respectively. The acetylation of N(5)-hydroxyornithine for FC biosynthesis involves the constitutively expressed sidL. FC is hydroxylated to HFC by an as yet uncharacterized enzyme during conidiation. Assembly of fusarinine C (FsC) and FC is catalyzed by two different nonribosomal peptide synthetases (NRPS), sidD and sidC respectively. Subsequently, sidG catalyzes N2-acetylation of FsC for forming TAFC. Both extra- and intracellular siderophores are crucial for growth during iron limitation and virulence. This is Mevalonyl-coenzyme A hydratase sidH from Aspergillus fumigatus (strain ATCC MYA-4609 / CBS 101355 / FGSC A1100 / Af293) (Neosartorya fumigata).